Here is a 275-residue protein sequence, read N- to C-terminus: NADH-quinone oxidoreductase subunit E 1 (275 aa).

The [2Fe-2S] cluster site is built by Cys99, Cys104, Cys140, and Cys144. A disordered region spans residues 200-275 (LQAPEPVEEK…DKSKPAKKPR (76 aa)). The span at 206–221 (VEEKKSVRASKAKDEQ) shows a compositional bias: basic and acidic residues. A compositionally biased stretch (polar residues) spans 231–242 (AKPSTATDVTNP). Low complexity predominate over residues 243–256 (TLKTPATARKAAAK). The span at 258–269 (VKIEGETVDKSK) shows a compositional bias: basic and acidic residues.

This sequence belongs to the complex I 24 kDa subunit family. It depends on [2Fe-2S] cluster as a cofactor.

The catalysed reaction is a quinone + NADH + 5 H(+)(in) = a quinol + NAD(+) + 4 H(+)(out). NDH-1 shuttles electrons from NADH, via FMN and iron-sulfur (Fe-S) centers, to quinones in the respiratory chain. The immediate electron acceptor for the enzyme in this species is believed to be ubiquinone. Couples the redox reaction to proton translocation (for every two electrons transferred, four hydrogen ions are translocated across the cytoplasmic membrane), and thus conserves the redox energy in a proton gradient. In Rhizobium meliloti (strain 1021) (Ensifer meliloti), this protein is NADH-quinone oxidoreductase subunit E 1 (nuoE1).